Reading from the N-terminus, the 48-residue chain is ATP synthase protein 8 (48 aa).

The chain crosses the membrane as a helical span at residues 4 to 24; sequence LVPFFFVNQVVYAFVILTVLI.

It belongs to the ATPase protein 8 family. In terms of assembly, F-type ATPases have 2 components, CF(1) - the catalytic core - and CF(0) - the membrane proton channel.

The protein localises to the mitochondrion membrane. Functionally, mitochondrial membrane ATP synthase (F(1)F(0) ATP synthase or Complex V) produces ATP from ADP in the presence of a proton gradient across the membrane which is generated by electron transport complexes of the respiratory chain. F-type ATPases consist of two structural domains, F(1) - containing the extramembraneous catalytic core and F(0) - containing the membrane proton channel, linked together by a central stalk and a peripheral stalk. During catalysis, ATP synthesis in the catalytic domain of F(1) is coupled via a rotary mechanism of the central stalk subunits to proton translocation. Part of the complex F(0) domain. Minor subunit located with subunit a in the membrane. In Aspergillus amstelodami, this protein is ATP synthase protein 8 (atp8).